The sequence spans 622 residues: Pesticidal crystal protein Cry2Ac (622 aa).

The protein belongs to the delta endotoxin family.

Its function is as follows. Promotes colloidosmotic lysis by binding to the midgut epithelial cells of lepidopteran larvae. Has low activity on dipteran larvae. The polypeptide is Pesticidal crystal protein Cry2Ac (cry2Ac) (Bacillus thuringiensis).